The chain runs to 713 residues: MNPTETKAIPVSKQLEGPHSPNKKRHKKQAVKTEPEKKSQSTKPSVVHEKKTQEVKPKEHPEPKSLPTHSADAGSKRAHKEKAVSRSNEQPTSEKSTKPKAKPQDPTPSDGKLSVTGVSAASGKPAETKKDDKSLTSSVPAESKSSKPSGKSDMDAALDDLIDTLGGPEETEEDNTTYTGPEVLDPMSSTYIEELGKREVTLPPKYRELLDKKEGIPVPPPDTSKPLGPDDAIDALSLDLTCSSPTADGKKTEKEKSTGEVLKAQSVGVIKSAAAPPHEKKRRVEEDTMSDQALEALSASLGSRKSEPELDLSSIKEIDEAKAKEEKLKKCGEDDETVPPEYRLKPAMDKDGKPLLPEAEEKPKPLSESELIDELSEDFDQSKRKEKQSKPTEKTKESQATAPTPVGEAVSRTSLCCVQSAPPKPATGMVPDDAVEALAGSLGKKEADPEDGKPVEDKVKEKAKEEDREKLGEKEETIPPDYRLEEVKDKDGKTLPHKDPKEPVLPLSEDFVLDALSQDFAGPPAASSLFEDAKLSAAVSEVVSQTSAPTTHSAGPPPDTVSDDKKLDDALDQLSDSLGQRQPDPDENKPIEDKVKEKAEAEHRDKLGERDDTIPPEYRHLLDKDEEGKSTKPPTKKPEAPKKPEAAQDPIDALSGDFDRCPSTTETSENTTKDKDKKTASKSKAPKNGGKAKDSTKAKEETSKQKSDGKSTS.

Disordered regions lie at residues 1–187 (MNPT…LDPM) and 211–506 (DKKE…PVLP). Residues 21–30 (PNKKRHKKQA) are compositionally biased toward basic residues. Lys-32 is covalently cross-linked (Glycyl lysine isopeptide (Lys-Gly) (interchain with G-Cter in SUMO2)). Residues 46 to 63 (VVHEKKTQEVKPKEHPEP) show a composition bias toward basic and acidic residues. Residue Lys-50 is modified to N6-acetyllysine. Polar residues predominate over residues 85–94 (SRSNEQPTSE). Ser-87 and Ser-134 each carry phosphoserine. At Thr-136 the chain carries Phosphothreonine. An Inhibitory domain 1 repeat occupies 171–223 (TEEDNTTYTGPEVLDPMSSTYIEELGKREVTLPPKYRELLDKKEGIPVPPPDT). A Phosphoserine modification is found at Ser-244. Basic and acidic residues-rich tracts occupy residues 248–258 (DGKKTEKEKST), 304–332 (RKSE…KKCG), and 342–367 (YRLK…KPLS). An Inhibitory domain 2 repeat occupies 307–359 (EPELDLSSIKEIDEAKAKEEKLKKCGEDDETVPPEYRLKPAMDKDGKPLLPEA). Phosphoserine is present on residues Ser-367, Ser-369, and Ser-376. Acidic residues predominate over residues 370–379 (ELIDELSEDF). Residues 380–397 (DQSKRKEKQSKPTEKTKE) are compositionally biased toward basic and acidic residues. Residue Ser-441 is modified to Phosphoserine. Over residues 443–502 (GKKEADPEDGKPVEDKVKEKAKEEDREKLGEKEETIPPDYRLEEVKDKDGKTLPHKDPKE) the composition is skewed to basic and acidic residues. The Inhibitory domain 3 repeat unit spans residues 447–500 (ADPEDGKPVEDKVKEKAKEEDREKLGEKEETIPPDYRLEEVKDKDGKTLPHKDP). Residues Ser-517 and Ser-528 each carry the phosphoserine modification. The segment at 536-713 (SAAVSEVVSQ…KQKSDGKSTS (178 aa)) is disordered. The span at 542-553 (VVSQTSAPTTHS) shows a compositional bias: polar residues. Phosphoserine is present on residues Ser-575 and Ser-577. The Inhibitory domain 4 repeat unit spans residues 583-636 (PDPDENKPIEDKVKEKAEAEHRDKLGERDDTIPPEYRHLLDKDEEGKSTKPPTK). Basic and acidic residues-rich tracts occupy residues 583–646 (PDPD…KPEA) and 691–713 (KAKD…KSTS).

This sequence belongs to the protease inhibitor I27 (calpastatin) family.

Its function is as follows. Specific inhibition of calpain (calcium-dependent cysteine protease). Plays a key role in postmortem tenderization of meat and have been proposed to be involved in muscle protein degradation in living tissue. The polypeptide is Calpastatin (CAST) (Sus scrofa (Pig)).